The following is a 185-amino-acid chain: Threonylcarbamoyl-AMP synthase (185 aa).

The 185-residue stretch at 1–185 (MKNLNQVVDA…AKTGNTLRQG (185 aa)) folds into the YrdC-like domain.

It belongs to the SUA5 family. TsaC subfamily.

The protein localises to the cytoplasm. The enzyme catalyses L-threonine + hydrogencarbonate + ATP = L-threonylcarbamoyladenylate + diphosphate + H2O. Functionally, required for the formation of a threonylcarbamoyl group on adenosine at position 37 (t(6)A37) in tRNAs that read codons beginning with adenine. Catalyzes the conversion of L-threonine, HCO(3)(-)/CO(2) and ATP to give threonylcarbamoyl-AMP (TC-AMP) as the acyladenylate intermediate, with the release of diphosphate. This chain is Threonylcarbamoyl-AMP synthase, found in Aliivibrio fischeri (strain ATCC 700601 / ES114) (Vibrio fischeri).